The following is a 706-amino-acid chain: Ribosomal RNA large subunit methyltransferase K/L (706 aa).

Residues 43–154 (LLYQSLLWSR…RDMASVALDL (112 aa)) enclose the THUMP domain.

The protein belongs to the methyltransferase superfamily. RlmKL family.

It is found in the cytoplasm. It catalyses the reaction guanosine(2445) in 23S rRNA + S-adenosyl-L-methionine = N(2)-methylguanosine(2445) in 23S rRNA + S-adenosyl-L-homocysteine + H(+). It carries out the reaction guanosine(2069) in 23S rRNA + S-adenosyl-L-methionine = N(2)-methylguanosine(2069) in 23S rRNA + S-adenosyl-L-homocysteine + H(+). Functionally, specifically methylates the guanine in position 2445 (m2G2445) and the guanine in position 2069 (m7G2069) of 23S rRNA. In Serratia proteamaculans (strain 568), this protein is Ribosomal RNA large subunit methyltransferase K/L.